Here is a 218-residue protein sequence, read N- to C-terminus: Large ribosomal subunit protein uL3 (218 aa).

2 disordered regions span residues 128 to 167 (FSRG…RMGG) and 199 to 218 (SLLN…QGGK).

Belongs to the universal ribosomal protein uL3 family. Part of the 50S ribosomal subunit. Forms a cluster with proteins L14 and L19.

In terms of biological role, one of the primary rRNA binding proteins, it binds directly near the 3'-end of the 23S rRNA, where it nucleates assembly of the 50S subunit. The sequence is that of Large ribosomal subunit protein uL3 from Prochlorococcus marinus (strain NATL2A).